Reading from the N-terminus, the 364-residue chain is Probable endopolygalacturonase B (364 aa).

A signal peptide spans 1 to 20; the sequence is MHFFQSSLVAATMGAALVAA. The propeptide occupies 21–29; it reads APAADLETR. A disulfide bond links C32 and C47. N-linked (GlcNAc...) asparagine glycans are attached at residues N138 and N141. PbH1 repeat units lie at residues 159-188, 189-210, 211-231, 240-261, 269-291, and 303-324; these read SDHLTIKDVLLDNSAGTKLGHNTDAFDVGS, STYITIDGATVYNQDDCLAVNS, GEHITFTNGYCNGGHGLSIGS, VNDVTISNSQVINSQNGARIKT, VTGVKFQDISLKGITKYGIVVQQ, and TNGVKVSDITFEKVTGTVTSSA. D203 (proton donor) is an active-site residue. C205 and C221 are oxidised to a cystine. Residue H225 is part of the active site. Cysteines 331 and 336 form a disulfide. An N-linked (GlcNAc...) asparagine glycan is attached at N338. A disulfide bridge links C355 with C364.

This sequence belongs to the glycosyl hydrolase 28 family.

It is found in the secreted. The enzyme catalyses (1,4-alpha-D-galacturonosyl)n+m + H2O = (1,4-alpha-D-galacturonosyl)n + (1,4-alpha-D-galacturonosyl)m.. Its function is as follows. Involved in maceration and soft-rotting of plant tissue. Hydrolyzes the 1,4-alpha glycosidic bonds of de-esterified pectate in the smooth region of the plant cell wall. This is Probable endopolygalacturonase B (pgaB) from Aspergillus fumigatus (strain ATCC MYA-4609 / CBS 101355 / FGSC A1100 / Af293) (Neosartorya fumigata).